A 148-amino-acid chain; its full sequence is Large ribosomal subunit protein bL19 (148 aa).

The protein belongs to the bacterial ribosomal protein bL19 family.

Its function is as follows. This protein is located at the 30S-50S ribosomal subunit interface and may play a role in the structure and function of the aminoacyl-tRNA binding site. This Paramagnetospirillum magneticum (strain ATCC 700264 / AMB-1) (Magnetospirillum magneticum) protein is Large ribosomal subunit protein bL19.